A 180-amino-acid polypeptide reads, in one-letter code: Pro-glucagon (180 aa).

The first 20 residues, 1–20 (MKSIYFVAGLFVMLVQGSWQ), serve as a signal peptide directing secretion. The disordered stretch occupies residues 26-59 (TEEKSRSFSASQADPLSDPDQMNEDKRHSQGTFT). Residue S54 is modified to Phosphoserine. Positions 84 to 89 (NRNNIA) are excised as a propeptide. Phosphoserine is present on residues S105 and S108. R127 bears the Arginine amide mark. Residues 131-145 (DFPEEVAIVEELGRR) constitute a propeptide that is removed on maturation. S150 and S152 each carry phosphoserine.

It belongs to the glucagon family. Proglucagon is post-translationally processed in a tissue-specific manner in pancreatic A cells and intestinal L cells. In pancreatic A cells, the major bioactive hormone is glucagon cleaved by PCSK2/PC2. In the intestinal L cells PCSK1/PC1 liberates GLP-1, GLP-2, glicentin and oxyntomodulin. GLP-1 is further N-terminally truncated by post-translational processing in the intestinal L cells resulting in GLP-1(7-37) GLP-1-(7-36)amide. The C-terminal amidation is neither important for the metabolism of GLP-1 nor for its effects on the endocrine pancreas. In terms of tissue distribution, secreted in the A cells of the islets of Langerhans. As to expression, secreted in the A cells of the islets of Langerhans. Secreted from enteroendocrine L cells throughout the gastrointestinal tract. Also secreted in selected neurons in the brain. Secreted from enteroendocrine cells throughout the gastrointestinal tract. Also secreted in selected neurons in the brain. In terms of tissue distribution, secreted from enteroendocrine cells throughout the gastrointestinal tract.

Its subcellular location is the secreted. Its function is as follows. Plays a key role in glucose metabolism and homeostasis. Regulates blood glucose by increasing gluconeogenesis and decreasing glycolysis. A counterregulatory hormone of insulin, raises plasma glucose levels in response to insulin-induced hypoglycemia. Plays an important role in initiating and maintaining hyperglycemic conditions in diabetes. Functionally, potent stimulator of glucose-dependent insulin release. Also stimulates insulin release in response to IL6. Plays important roles on gastric motility and the suppression of plasma glucagon levels. May be involved in the suppression of satiety and stimulation of glucose disposal in peripheral tissues, independent of the actions of insulin. Has growth-promoting activities on intestinal epithelium. May also regulate the hypothalamic pituitary axis (HPA) via effects on LH, TSH, CRH, oxytocin, and vasopressin secretion. Increases islet mass through stimulation of islet neogenesis and pancreatic beta cell proliferation. Inhibits beta cell apoptosis. In terms of biological role, stimulates intestinal growth and up-regulates villus height in the small intestine, concomitant with increased crypt cell proliferation and decreased enterocyte apoptosis. The gastrointestinal tract, from the stomach to the colon is the principal target for GLP-2 action. Plays a key role in nutrient homeostasis, enhancing nutrient assimilation through enhanced gastrointestinal function, as well as increasing nutrient disposal. Stimulates intestinal glucose transport and decreases mucosal permeability. Significantly reduces food intake. Inhibits gastric emptying in humans. Suppression of gastric emptying may lead to increased gastric distension, which may contribute to satiety by causing a sensation of fullness. Its function is as follows. May modulate gastric acid secretion and the gastro-pyloro-duodenal activity. May play an important role in intestinal mucosal growth in the early period of life. The sequence is that of Pro-glucagon from Homo sapiens (Human).